The primary structure comprises 503 residues: Cysteine--tRNA ligase (503 aa).

Residue C31 participates in Zn(2+) binding. Positions P33 to N43 match the 'HIGH' region motif. 3 residues coordinate Zn(2+): C225, H264, and E268. Positions K297 to S301 match the 'KMSKS' region motif. Position 300 (K300) interacts with ATP.

Belongs to the class-I aminoacyl-tRNA synthetase family. In terms of assembly, monomer. It depends on Zn(2+) as a cofactor.

The protein resides in the cytoplasm. It carries out the reaction tRNA(Cys) + L-cysteine + ATP = L-cysteinyl-tRNA(Cys) + AMP + diphosphate. The chain is Cysteine--tRNA ligase from Bartonella tribocorum (strain CIP 105476 / IBS 506).